Consider the following 380-residue polypeptide: Cytochrome b (380 aa).

Helical transmembrane passes span 33–53, 77–98, 113–133, and 178–198; these read FGSL…FLAM, WLIR…FLHV, WNMG…GYVL, and FFAF…VHLL. His-83 and His-97 together coordinate heme b. Residues His-182 and His-196 each coordinate heme b. Residue His-201 coordinates a ubiquinone. A run of 4 helical transmembrane segments spans residues 226-246, 288-308, 320-340, and 347-367; these read IKDF…VLFF, LGGV…PLLH, ITQT…WIGG, and FIMI…IFMP.

This sequence belongs to the cytochrome b family. The cytochrome bc1 complex contains 11 subunits: 3 respiratory subunits (MT-CYB, CYC1 and UQCRFS1), 2 core proteins (UQCRC1 and UQCRC2) and 6 low-molecular weight proteins (UQCRH/QCR6, UQCRB/QCR7, UQCRQ/QCR8, UQCR10/QCR9, UQCR11/QCR10 and a cleavage product of UQCRFS1). This cytochrome bc1 complex then forms a dimer. Requires heme b as cofactor.

The protein localises to the mitochondrion inner membrane. Component of the ubiquinol-cytochrome c reductase complex (complex III or cytochrome b-c1 complex) that is part of the mitochondrial respiratory chain. The b-c1 complex mediates electron transfer from ubiquinol to cytochrome c. Contributes to the generation of a proton gradient across the mitochondrial membrane that is then used for ATP synthesis. The sequence is that of Cytochrome b (MT-CYB) from Chionomys roberti (Robert's snow vole).